Consider the following 406-residue polypeptide: Serine/threonine transporter SstT (406 aa).

A run of 9 helical transmembrane segments spans residues 15–35 (LVIQ…VSPS), 47–67 (FVGA…AASI), 81–101 (IIVM…VLSF), 140–160 (ALMS…GLAL), 191–211 (FGIF…ALAG), 215–235 (LLVV…PAMV), 289–309 (IPLG…TLTL), 315–335 (MGIE…AVSA), and 362–382 (IAMQ…SAET).

Belongs to the dicarboxylate/amino acid:cation symporter (DAACS) (TC 2.A.23) family.

The protein localises to the cell inner membrane. The catalysed reaction is L-serine(in) + Na(+)(in) = L-serine(out) + Na(+)(out). It carries out the reaction L-threonine(in) + Na(+)(in) = L-threonine(out) + Na(+)(out). In terms of biological role, involved in the import of serine and threonine into the cell, with the concomitant import of sodium (symport system). The chain is Serine/threonine transporter SstT from Vibrio vulnificus (strain YJ016).